Reading from the N-terminus, the 320-residue chain is Glutathione synthetase (320 aa).

Residues 127 to 312 (KLAITEFPRF…VAGLMIDALE (186 aa)) form the ATP-grasp domain. An ATP-binding site is contributed by 153–209 (LAEHEDIILKPLDGMGGAGIFRIQNTDHNIGVIIETLTRYGTRTIMAQRFLPEIREG). Residues glutamate 283 and asparagine 285 each coordinate Mg(2+).

Belongs to the prokaryotic GSH synthase family. The cofactor is Mg(2+). Requires Mn(2+) as cofactor.

It carries out the reaction gamma-L-glutamyl-L-cysteine + glycine + ATP = glutathione + ADP + phosphate + H(+). It participates in sulfur metabolism; glutathione biosynthesis; glutathione from L-cysteine and L-glutamate: step 2/2. This Nitrosomonas europaea (strain ATCC 19718 / CIP 103999 / KCTC 2705 / NBRC 14298) protein is Glutathione synthetase.